The primary structure comprises 182 residues: ADP-ribosylation factor 3 (182 aa).

Glycine 2 carries N-myristoyl glycine lipidation. Residues 24 to 31 (GLDNAGKT), 67 to 71 (DLGGQ), and 126 to 129 (NKQD) contribute to the GTP site.

It belongs to the small GTPase superfamily. Arf family. As to quaternary structure, interacts with GRIP; but preferentially when bound to GTP.

The protein resides in the golgi apparatus. Its function is as follows. GTP-binding protein involved in protein trafficking; may modulate vesicle budding and uncoating within the Golgi apparatus. The polypeptide is ADP-ribosylation factor 3 (ARF3) (Arabidopsis thaliana (Mouse-ear cress)).